A 488-amino-acid polypeptide reads, in one-letter code: ATP synthase subunit beta (488 aa).

164–171 (GGAGVGKT) contacts ATP.

It belongs to the ATPase alpha/beta chains family. As to quaternary structure, F-type ATPases have 2 components, CF(1) - the catalytic core - and CF(0) - the membrane proton channel. CF(1) has five subunits: alpha(3), beta(3), gamma(1), delta(1), epsilon(1). CF(0) has four main subunits: a(1), b(1), b'(1) and c(9-12).

The protein localises to the cellular thylakoid membrane. It carries out the reaction ATP + H2O + 4 H(+)(in) = ADP + phosphate + 5 H(+)(out). Its function is as follows. Produces ATP from ADP in the presence of a proton gradient across the membrane. The catalytic sites are hosted primarily by the beta subunits. In Prochlorococcus marinus (strain MIT 9211), this protein is ATP synthase subunit beta.